The chain runs to 263 residues: Ribosomal RNA small subunit methyltransferase A (263 aa).

Positions 20, 22, 47, 68, 90, and 111 each coordinate S-adenosyl-L-methionine.

It belongs to the class I-like SAM-binding methyltransferase superfamily. rRNA adenine N(6)-methyltransferase family. RsmA subfamily.

It is found in the cytoplasm. The catalysed reaction is adenosine(1518)/adenosine(1519) in 16S rRNA + 4 S-adenosyl-L-methionine = N(6)-dimethyladenosine(1518)/N(6)-dimethyladenosine(1519) in 16S rRNA + 4 S-adenosyl-L-homocysteine + 4 H(+). Specifically dimethylates two adjacent adenosines (A1518 and A1519) in the loop of a conserved hairpin near the 3'-end of 16S rRNA in the 30S particle. May play a critical role in biogenesis of 30S subunits. The sequence is that of Ribosomal RNA small subunit methyltransferase A from Chlorobium chlorochromatii (strain CaD3).